The chain runs to 215 residues: 3-isopropylmalate dehydratase small subunit (215 aa).

Belongs to the LeuD family. LeuD type 1 subfamily. Heterodimer of LeuC and LeuD.

The enzyme catalyses (2R,3S)-3-isopropylmalate = (2S)-2-isopropylmalate. The protein operates within amino-acid biosynthesis; L-leucine biosynthesis; L-leucine from 3-methyl-2-oxobutanoate: step 2/4. Functionally, catalyzes the isomerization between 2-isopropylmalate and 3-isopropylmalate, via the formation of 2-isopropylmaleate. This Xylella fastidiosa (strain M23) protein is 3-isopropylmalate dehydratase small subunit.